The sequence spans 284 residues: MIDSKTVLLGLIGHPVEHSFSPIMHNAAINDLKINYVYLGFDISNENLKNVVNSAKTLSILGFNVTIPYKVEIMKYLDKIDDTAKFIGAVNTVKIENGEAVGYNTDGIGAKKSLEEEIGKFNNKNILMIGSGGSSRSISFELAKENEITIINRNIKNAKELSFEISKNLATKEYGEKYLKYGDLSTDISKFDIIINTTPVGMYPDVNSKPVIPLKNAKNDAIIMDIIYNPFEPVFLKEAKKYGLKTLNGLGMLIYQGAVSFEIWTGFKPDTNVMKNSIVNLLKS.

Shikimate-binding positions include 19 to 21 (SFS) and Thr-66. Lys-70 acts as the Proton acceptor in catalysis. Residue Asp-82 coordinates NADP(+). Shikimate contacts are provided by Asn-91 and Asp-106. Residues 130–134 (GSGGS) and Ile-226 contribute to the NADP(+) site. Shikimate is bound at residue Tyr-228. Gly-249 provides a ligand contact to NADP(+).

This sequence belongs to the shikimate dehydrogenase family. In terms of assembly, homodimer.

It catalyses the reaction shikimate + NADP(+) = 3-dehydroshikimate + NADPH + H(+). Its pathway is metabolic intermediate biosynthesis; chorismate biosynthesis; chorismate from D-erythrose 4-phosphate and phosphoenolpyruvate: step 4/7. In terms of biological role, involved in the biosynthesis of the chorismate, which leads to the biosynthesis of aromatic amino acids. Catalyzes the reversible NADPH linked reduction of 3-dehydroshikimate (DHSA) to yield shikimate (SA). The sequence is that of Shikimate dehydrogenase (NADP(+)) from Methanococcus vannielii (strain ATCC 35089 / DSM 1224 / JCM 13029 / OCM 148 / SB).